A 325-amino-acid chain; its full sequence is GMP reductase (325 aa).

Cysteine 174 acts as the Thioimidate intermediate in catalysis. Isoleucine 203–valine 226 is a binding site for NADP(+).

Belongs to the IMPDH/GMPR family. GuaC type 2 subfamily.

It carries out the reaction IMP + NH4(+) + NADP(+) = GMP + NADPH + 2 H(+). Functionally, catalyzes the irreversible NADPH-dependent deamination of GMP to IMP. It functions in the conversion of nucleobase, nucleoside and nucleotide derivatives of G to A nucleotides, and in maintaining the intracellular balance of A and G nucleotides. The sequence is that of GMP reductase from Enterococcus faecalis (strain ATCC 700802 / V583).